A 351-amino-acid polypeptide reads, in one-letter code: Aromatic amino acid aminotransferase (351 aa).

An N6-(pyridoxal phosphate)lysine modification is found at lysine 215.

This sequence belongs to the class-II pyridoxal-phosphate-dependent aminotransferase family. As to quaternary structure, homodimer. The cofactor is pyridoxal 5'-phosphate.

It catalyses the reaction an aromatic L-alpha-amino acid + 2-oxoglutarate = an aromatic oxo-acid + L-glutamate. Aminotransferase that catalyzes the conversion of aromatic amino acids and 2-oxoglutarate into corresponding aromatic oxo acids and L-glutamate. The polypeptide is Aromatic amino acid aminotransferase (Mycolicibacterium vanbaalenii (strain DSM 7251 / JCM 13017 / BCRC 16820 / KCTC 9966 / NRRL B-24157 / PYR-1) (Mycobacterium vanbaalenii)).